The primary structure comprises 405 residues: Prostaglandin E2 receptor EP1 subtype (405 aa).

At 1–39 (MSPCGLNLSLADEAATCATPRLPNTSVVLPTGDNGTSPA) the chain is on the extracellular side. N7, N24, and N34 each carry an N-linked (GlcNAc...) asparagine glycan. Residues 40–62 (LPIFSMTLGAVSNVLALALLAQV) traverse the membrane as a helical segment. At 63 to 80 (AGRMRRRRSAATFLLFVA) the chain is on the cytoplasmic side. Residues 81-99 (SLLAIDLAGHVIPGALVLR) traverse the membrane as a helical segment. Over 100 to 113 (LYTAGRAPAGGACH) the chain is Extracellular. C112 and C190 form a disulfide bridge. Residues 114-135 (FLGGCMVFFGLCPLLLGCGMAV) traverse the membrane as a helical segment. Topologically, residues 136-157 (ERCVGVTQPLIHAARVSVARAR) are cytoplasmic. Residues 158 to 179 (LALAVLAAMALAVALLPLVHVG) traverse the membrane as a helical segment. Topologically, residues 180-202 (RYELQYPGTWCFISLGPRGGWRQ) are extracellular. A helical membrane pass occupies residues 203–228 (ALLAGLFAGLGLAALLAALVCNTLSG). At 229–301 (LALLRARWRR…HAHDVEMVGQ (73 aa)) the chain is on the cytoplasmic side. The interval 243–287 (RFRKTAGPDDRRRWGSRGPRLASASSASSITSATATLRSSRGGGS) is disordered. Positions 262-282 (RLASASSASSITSATATLRSS) are enriched in low complexity. The chain crosses the membrane as a helical span at residues 302–323 (LVGIMVVSCICWSPLLVLVVLA). The Extracellular portion of the chain corresponds to 324-337 (IGGWNSNSLQRPLF). The helical transmembrane segment at 338-357 (LAVRLASWNQILDPWVYILL) threads the bilayer. The Cytoplasmic segment spans residues 358–405 (RQAMLRQLLRLLPLRVSAKGGPTELGLTKSAWEASSLRSSRHSGFSHL).

Belongs to the G-protein coupled receptor 1 family. In terms of processing, phosphorylated. Abundant in kidney and in a lesser amount in lung.

The protein localises to the cell membrane. Receptor for prostaglandin E2 (PGE2). The activity of this receptor is mediated by G(q) proteins which activate a phosphatidylinositol-calcium second messenger system. May play a role as an important modulator of renal function. Implicated the smooth muscle contractile response to PGE2 in various tissues. The sequence is that of Prostaglandin E2 receptor EP1 subtype (Ptger1) from Mus musculus (Mouse).